A 139-amino-acid chain; its full sequence is Peptide methionine sulfoxide reductase MsrB (139 aa).

Residues 8–130 (DQEWRQQLTD…NSASLRFHSA (123 aa)) enclose the MsrB domain. Residues C47, C50, C96, and C99 each contribute to the Zn(2+) site. The active-site Nucleophile is the C119.

It belongs to the MsrB Met sulfoxide reductase family. Zn(2+) serves as cofactor.

It catalyses the reaction L-methionyl-[protein] + [thioredoxin]-disulfide + H2O = L-methionyl-(R)-S-oxide-[protein] + [thioredoxin]-dithiol. The protein is Peptide methionine sulfoxide reductase MsrB of Hahella chejuensis (strain KCTC 2396).